Reading from the N-terminus, the 64-residue chain is Large ribosomal subunit protein uL29 (64 aa).

The protein belongs to the universal ribosomal protein uL29 family.

The polypeptide is Large ribosomal subunit protein uL29 (Legionella pneumophila (strain Lens)).